The primary structure comprises 1406 residues: Sterol 3-beta-glucosyltransferase (1406 aa).

Residues 83–231 (ARFDESSDSD…IHSSHESSTS (149 aa)) are disordered. Polar residues predominate over residues 110-128 (GSSNPVNSQTEQRSGSQTS). Positions 209-231 (SAGRSQNSSQESSIHSSHESSTS) are enriched in low complexity. The region spanning 236-286 (RLMEMFDFNKPEKVLVEYACSLLQSMLLQGYMYVTEGHICFYAYLPRKSTV) is the GRAM 1 domain. Residues 286–385 (VAIKSGYLHK…WVKALQKVIF (100 aa)) form the PH domain. Disordered regions lie at residues 457-558 (ASGH…AESA) and 576-622 (LDKR…DGKP). Residues 468–478 (HADRSPRSDRT) show a composition bias toward basic and acidic residues. Polar residues-rich tracts occupy residues 490 to 499 (GTSQPGNGSA) and 531 to 548 (SESI…SAVW). Residues 576-587 (LDKRACSDERSG) are compositionally biased toward basic and acidic residues. Residues 730–796 (DRFRAHFALP…KDVENVEKEK (67 aa)) form the GRAM 2 domain. Residues Ser917, Arg918, Asp920, Ala1220, His1222, His1235, Gly1239, Thr1240, Asp1259, and Gln1260 each contribute to the UDP-alpha-D-glucose site. The interval 1334-1406 (QRSIASSTPF…LTNSIHGAGR (73 aa)) is disordered. The span at 1336-1349 (SIASSTPFSPTPSA) shows a compositional bias: low complexity. Positions 1355–1375 (QGDDDVEDSEEWTFVGDDNEM) are enriched in acidic residues. The span at 1376 to 1387 (DMSRRMRDRAIS) shows a compositional bias: basic and acidic residues. Polar residues predominate over residues 1397 to 1406 (LTNSIHGAGR).

Belongs to the glycosyltransferase 28 family.

The protein resides in the cytoplasm. The protein localises to the preautophagosomal structure membrane. The catalysed reaction is a sterol + UDP-alpha-D-glucose = a sterol 3-beta-D-glucoside + UDP + H(+). It catalyses the reaction ergosterol + UDP-alpha-D-glucose = ergosteryl 3-beta-D-glucoside + UDP + H(+). Sterol glycosyltransferase responsible for the glycosylation of ergosterol to form ergosterol-glucoside. In Aspergillus clavatus (strain ATCC 1007 / CBS 513.65 / DSM 816 / NCTC 3887 / NRRL 1 / QM 1276 / 107), this protein is Sterol 3-beta-glucosyltransferase.